A 1749-amino-acid chain; its full sequence is Kinase non-catalytic C-lobe domain-containing protein 1 (1749 aa).

Residues 37–217 enclose the KIND 1 domain; the sequence is VSLADILSLR…QDVSESSWRE (181 aa). Disordered stretches follow at residues 210 to 275 and 361 to 435; these read VSES…SHSR and CRLW…ARQL. Composition is skewed to basic and acidic residues over residues 363 to 373 and 410 to 430; these read LWPEQEPEHQL and ADPR…RIPE. Positions 444–608 constitute a KIND 2 domain; the sequence is VSLQDLLSQL…RASICQVYQE (165 aa). 2 disordered regions span residues 689-871 and 962-1061; these read ARDQ…RPAD and QASP…GGAS. Residues 702–717 show a composition bias toward basic and acidic residues; sequence ERGGQREGEGEEKLSL. 2 stretches are compositionally biased toward low complexity: residues 739-748 and 766-779; these read QGAAPEPLGA and PANQ…AAPG. Positions 823–833 are enriched in basic residues; the sequence is HGPRHPPKPPR. Over residues 853–871 the composition is skewed to basic and acidic residues; sequence GERDDQSPDSVPERPRPAD. Ser-964 carries the phosphoserine modification. Over residues 980 to 990 the composition is skewed to low complexity; that stretch reads SQSPRSPSSKR. Residues 1005-1019 show a composition bias toward polar residues; sequence RTSSRAPCSPTSVSD. The span at 1040-1056 shows a compositional bias: basic and acidic residues; it reads VKAERAQQPEAGEDRRP. Residues 1133–1190 are a coiled coil; it reads QQLMMEKRNYRKTLKFYQKLLQKEKRNKGSDVKTMLSKLKGQLEEMKSRVQFLSLVKK. Positions 1246–1371 constitute an N-terminal Ras-GEF domain; it reads KARILQAGTP…HLLGLLEVGM (126 aa). In terms of domain architecture, Ras-GEF spans 1468 to 1719; that stretch reads STHQLFSQLT…SGADISTLAA (252 aa).

In terms of assembly, interacts (via KIND2) with MAP2; the interaction enhances MAP2 phosphorylation and localizes KNDC1 to dendrites. Expressed specifically in the cerebral cortex.

It localises to the cell projection. Its subcellular location is the dendrite. The protein localises to the perikaryon. Its function is as follows. RAS-Guanine nucleotide exchange factor (GEF) that controls the negative regulation of neuronal dendrite growth by mediating a signaling pathway linking RAS and MAP2. May be involved in cellular senescence. The protein is Kinase non-catalytic C-lobe domain-containing protein 1 of Homo sapiens (Human).